A 910-amino-acid polypeptide reads, in one-letter code: Lysine-specific demethylase 7 homolog (910 aa).

The span at 1 to 11 (MDGNDINIQKN) shows a compositional bias: polar residues. Disordered stretches follow at residues 1-58 (MDGN…HQTP), 103-162 (NKMG…GSEP), and 183-212 (QEELKLEVDSDSEEDDVPEQKTPKESDRCG). Residues 25-35 (QHSDHKNHESA) are compositionally biased toward basic and acidic residues. Over residues 43–58 (YTASQPALSSTEHQTP) the composition is skewed to polar residues. Positions 118–130 (PKSEPKIEPHVTD) are enriched in basic and acidic residues. Positions 150 to 160 (ESNQNYVSNGS) are enriched in polar residues. Over residues 200 to 210 (PEQKTPKESDR) the composition is skewed to basic and acidic residues. Residues 208–290 (SDRCGGCGKF…KFFCPKCVPH (83 aa)) form a PHD-type zinc finger. The JmjC domain occupies 441 to 612 (SDNNEMKEIA…MQMRVYHLEN (172 aa)). Residues 505–510 (TDFHVD), Tyr518, Lys525, and His580 each bind substrate. 2 residues coordinate Fe cation: His508 and Asp510. His580 serves as a coordination point for Fe cation. Disordered regions lie at residues 712-790 (KIQN…PSEV) and 864-910 (EAVH…KLKM). Over residues 748–757 (YKKKYTKKAK) the composition is skewed to basic residues. The span at 758–780 (KDNDDAPKVKKAKKEEVPEEKVP) shows a compositional bias: basic and acidic residues.

It belongs to the JHDM1 histone demethylase family. JHDM1D subfamily. Requires Fe(2+) as cofactor. As to expression, mainly expressed in neurons. Also weakly expressed in some muscle, intestinal and hypodermal cells.

The protein localises to the nucleus. With respect to regulation, competitively inhibited by 2-hydroxyglutarate. Its function is as follows. Histone demethylase required for nervous system development. Specifically demethylates dimethylated 'Lys-9', 'Lys-23' and 'Lys-27' (H3K9me2, H3K23me2 and H3K27me2, respectively) of histone H3, thereby playing a central role in histone code. Promotes mitochondrial stress-induced longevity. The sequence is that of Lysine-specific demethylase 7 homolog (jmjd-1.2) from Caenorhabditis elegans.